Consider the following 156-residue polypeptide: Endogenous retrovirus group K member 6 Pro protein (156 aa).

The Peptidase A2 domain occupies 21–96 (FEGLVDTGAD…IPLNLWGRDL (76 aa)). Asp-26 is a catalytic residue. The G-patch domain occupies 111 to 156 (YSPTSQKIMTKMGYIPGKGLGKNEDGIKIPVEAKINQEREGIGNPC).

This sequence belongs to the peptidase A2 family. HERV class-II K(HML-2) subfamily. Active as a homodimer. In terms of processing, autoproteolytically processed at the N-terminus. Expected C-terminal autoprocessing not detected. The sequence shown is that of the processed Pro protein.

The catalysed reaction is Processing at the authentic HIV-1 PR recognition site and release of the mature p17 matrix and the p24 capsid protein, as a result of the cleavage of the -SQNY-|-PIVQ- cleavage site.. Retroviral proteases have roles in the processing of the primary translation products and the maturation of the viral particle. Endogenous Pro proteins may have kept, lost or modified their original function during evolution. This Homo sapiens (Human) protein is Endogenous retrovirus group K member 6 Pro protein (ERVK-6).